We begin with the raw amino-acid sequence, 205 residues long: Putative 3-methyladenine DNA glycosylase (205 aa).

This sequence belongs to the DNA glycosylase MPG family.

In Bacillus thuringiensis (strain Al Hakam), this protein is Putative 3-methyladenine DNA glycosylase.